The primary structure comprises 122 residues: Ig heavy chain V region M603 (122 aa).

Residues 1-121 (EVKLVESGGG…WGAGTTVTVS (121 aa)) form the Ig-like domain.

This chain is Ig heavy chain V region M603, found in Mus musculus (Mouse).